Consider the following 416-residue polypeptide: Gamma-glutamyl phosphate reductase (416 aa).

This sequence belongs to the gamma-glutamyl phosphate reductase family.

It is found in the cytoplasm. The enzyme catalyses L-glutamate 5-semialdehyde + phosphate + NADP(+) = L-glutamyl 5-phosphate + NADPH + H(+). It participates in amino-acid biosynthesis; L-proline biosynthesis; L-glutamate 5-semialdehyde from L-glutamate: step 2/2. Functionally, catalyzes the NADPH-dependent reduction of L-glutamate 5-phosphate into L-glutamate 5-semialdehyde and phosphate. The product spontaneously undergoes cyclization to form 1-pyrroline-5-carboxylate. The polypeptide is Gamma-glutamyl phosphate reductase (Petrotoga mobilis (strain DSM 10674 / SJ95)).